Consider the following 72-residue polypeptide: DNA-directed RNA polymerase subunit omega (72 aa).

The protein belongs to the RNA polymerase subunit omega family. As to quaternary structure, the RNAP catalytic core consists of 2 alpha, 1 beta, 1 beta' and 1 omega subunit. When a sigma factor is associated with the core the holoenzyme is formed, which can initiate transcription.

It catalyses the reaction RNA(n) + a ribonucleoside 5'-triphosphate = RNA(n+1) + diphosphate. Functionally, promotes RNA polymerase assembly. Latches the N- and C-terminal regions of the beta' subunit thereby facilitating its interaction with the beta and alpha subunits. This Clostridium botulinum (strain Loch Maree / Type A3) protein is DNA-directed RNA polymerase subunit omega.